The chain runs to 337 residues: DNA-directed RNA polymerase subunit alpha (337 aa).

The alpha N-terminal domain (alpha-NTD) stretch occupies residues 1 to 233 (MIQKNWQELI…DQLSIFVNFE (233 aa)). The tract at residues 249-337 (FNPALLKKVD…DLAKRYEDQY (89 aa)) is alpha C-terminal domain (alpha-CTD).

The protein belongs to the RNA polymerase alpha chain family. Homodimer. The RNAP catalytic core consists of 2 alpha, 1 beta, 1 beta' and 1 omega subunit. When a sigma factor is associated with the core the holoenzyme is formed, which can initiate transcription.

The catalysed reaction is RNA(n) + a ribonucleoside 5'-triphosphate = RNA(n+1) + diphosphate. Its function is as follows. DNA-dependent RNA polymerase catalyzes the transcription of DNA into RNA using the four ribonucleoside triphosphates as substrates. The sequence is that of DNA-directed RNA polymerase subunit alpha from Brucella suis (strain ATCC 23445 / NCTC 10510).